The chain runs to 502 residues: Acetylcholine receptor subunit alpha-type unc-63 (502 aa).

The first 23 residues, Met-1–Ala-23, serve as a signal peptide directing secretion. The Extracellular segment spans residues Asn-24–Thr-263. Asn-136 carries an N-linked (GlcNAc...) asparagine glycan. Cys-151 and Cys-165 are disulfide-bonded. 3 helical membrane passes run Val-264 to Pro-284, Leu-293 to Pro-313, and Leu-326 to Val-346. The Cytoplasmic segment spans residues His-347 to Arg-470. Residues Ile-471 to Ala-491 traverse the membrane as a helical segment.

Belongs to the ligand-gated ion channel (TC 1.A.9) family. Acetylcholine receptor (TC 1.A.9.1) subfamily. Component of nicotinic acetylcholine receptor. In muscles, composed of 2 non-alpha subunits lev-1 and unc-29, and 3 alpha subunits unc-38, unc-63 and lev-8. In cholinergic motoneurons, composed of 2 non-alpha subunits acr-2 and acr-3, and 3 alpha subunits unc-38, unc-63 and acr-12. Interacts with lev-10. In terms of tissue distribution, expressed in body wall muscles, in vulval muscles and in neurons.

Its subcellular location is the postsynaptic cell membrane. It is found in the cell membrane. In terms of biological role, alpha subunit of nicotinic acetylcholine receptor (nAChR). Probably acts in cholinergic motoneurons to regulate presynaptic neurotransmitter release, thereby ensuring normal level of excitation of cholinergic motoneurons during locomotion. Involved in nAChR sensitivity to nicotine and levamisole. This chain is Acetylcholine receptor subunit alpha-type unc-63 (unc-63), found in Caenorhabditis elegans.